The sequence spans 142 residues: Small ribosomal subunit protein uS9 (142 aa).

It belongs to the universal ribosomal protein uS9 family. As to quaternary structure, component of the small ribosomal subunit (SSU). Mature N.crassa ribosomes consist of a small (40S) and a large (60S) subunit. The 40S small subunit contains 1 molecule of ribosomal RNA (18S rRNA) and at least 32 different proteins. The large 60S subunit contains 3 rRNA molecules (26S, 5.8S and 5S rRNA) and at least 42 different proteins.

The protein localises to the cytoplasm. Functionally, component of the ribosome, a large ribonucleoprotein complex responsible for the synthesis of proteins in the cell. The small ribosomal subunit (SSU) binds messenger RNAs (mRNAs) and translates the encoded message by selecting cognate aminoacyl-transfer RNA (tRNA) molecules. The large subunit (LSU) contains the ribosomal catalytic site termed the peptidyl transferase center (PTC), which catalyzes the formation of peptide bonds, thereby polymerizing the amino acids delivered by tRNAs into a polypeptide chain. The nascent polypeptides leave the ribosome through a tunnel in the LSU and interact with protein factors that function in enzymatic processing, targeting, and the membrane insertion of nascent chains at the exit of the ribosomal tunnel. In Neurospora crassa (strain ATCC 24698 / 74-OR23-1A / CBS 708.71 / DSM 1257 / FGSC 987), this protein is Small ribosomal subunit protein uS9 (rps-16).